Reading from the N-terminus, the 534-residue chain is CTP synthase (534 aa).

An amidoligase domain region spans residues 1 to 267; that stretch reads MTKYIFVTGG…DQIVCDHLKL (267 aa). A CTP-binding site is contributed by S13. Residue S13 participates in UTP binding. 14-19 contributes to the ATP binding site; sequence SIGKGI. Y54 serves as a coordination point for L-glutamine. Position 71 (D71) interacts with ATP. Mg(2+)-binding residues include D71 and E141. CTP-binding positions include 148–150, 188–193, and K224; these read DIE and KTKPTQ. UTP-binding positions include 188 to 193 and K224; that span reads KTKPTQ. 240 to 242 contributes to the ATP binding site; sequence RDV. The 243-residue stretch at 292–534 folds into the Glutamine amidotransferase type-1 domain; it reads KIALVGKYVE…FVTAAIKNSN (243 aa). G354 contacts L-glutamine. C381 functions as the Nucleophile; for glutamine hydrolysis in the catalytic mechanism. L-glutamine-binding positions include 382 to 385, E405, and R463; that span reads LGMQ. Catalysis depends on residues H508 and E510.

It belongs to the CTP synthase family. As to quaternary structure, homotetramer.

It carries out the reaction UTP + L-glutamine + ATP + H2O = CTP + L-glutamate + ADP + phosphate + 2 H(+). The enzyme catalyses L-glutamine + H2O = L-glutamate + NH4(+). It catalyses the reaction UTP + NH4(+) + ATP = CTP + ADP + phosphate + 2 H(+). It functions in the pathway pyrimidine metabolism; CTP biosynthesis via de novo pathway; CTP from UDP: step 2/2. With respect to regulation, allosterically activated by GTP, when glutamine is the substrate; GTP has no effect on the reaction when ammonia is the substrate. The allosteric effector GTP functions by stabilizing the protein conformation that binds the tetrahedral intermediate(s) formed during glutamine hydrolysis. Inhibited by the product CTP, via allosteric rather than competitive inhibition. Catalyzes the ATP-dependent amination of UTP to CTP with either L-glutamine or ammonia as the source of nitrogen. Regulates intracellular CTP levels through interactions with the four ribonucleotide triphosphates. This chain is CTP synthase, found in Streptococcus pyogenes serotype M18 (strain MGAS8232).